The following is a 189-amino-acid chain: Recombination protein RecR (189 aa).

The C4-type zinc-finger motif lies at 48–63 (CQTCFHLSAEPLCDIC). Positions 71 to 165 (QLLCVVADSR…QVSRIAYGLP (95 aa)) constitute a Toprim domain.

It belongs to the RecR family.

May play a role in DNA repair. It seems to be involved in an RecBC-independent recombinational process of DNA repair. It may act with RecF and RecO. The protein is Recombination protein RecR of Prochlorococcus marinus (strain MIT 9303).